The chain runs to 253 residues: Imidazole glycerol phosphate synthase subunit HisF (253 aa).

Residues D11 and D130 contribute to the active site.

The protein belongs to the HisA/HisF family. As to quaternary structure, heterodimer of HisH and HisF.

The protein resides in the cytoplasm. The enzyme catalyses 5-[(5-phospho-1-deoxy-D-ribulos-1-ylimino)methylamino]-1-(5-phospho-beta-D-ribosyl)imidazole-4-carboxamide + L-glutamine = D-erythro-1-(imidazol-4-yl)glycerol 3-phosphate + 5-amino-1-(5-phospho-beta-D-ribosyl)imidazole-4-carboxamide + L-glutamate + H(+). It participates in amino-acid biosynthesis; L-histidine biosynthesis; L-histidine from 5-phospho-alpha-D-ribose 1-diphosphate: step 5/9. In terms of biological role, IGPS catalyzes the conversion of PRFAR and glutamine to IGP, AICAR and glutamate. The HisF subunit catalyzes the cyclization activity that produces IGP and AICAR from PRFAR using the ammonia provided by the HisH subunit. The polypeptide is Imidazole glycerol phosphate synthase subunit HisF (Ruegeria pomeroyi (strain ATCC 700808 / DSM 15171 / DSS-3) (Silicibacter pomeroyi)).